Reading from the N-terminus, the 326-residue chain is 4-hydroxythreonine-4-phosphate dehydrogenase (326 aa).

Position 132 (T132) interacts with substrate. A divalent metal cation contacts are provided by H160, H205, and H260. Substrate contacts are provided by K268, N277, and R286.

This sequence belongs to the PdxA family. Homodimer. Zn(2+) is required as a cofactor. Mg(2+) serves as cofactor. Requires Co(2+) as cofactor.

Its subcellular location is the cytoplasm. It catalyses the reaction 4-(phosphooxy)-L-threonine + NAD(+) = 3-amino-2-oxopropyl phosphate + CO2 + NADH. The protein operates within cofactor biosynthesis; pyridoxine 5'-phosphate biosynthesis; pyridoxine 5'-phosphate from D-erythrose 4-phosphate: step 4/5. In terms of biological role, catalyzes the NAD(P)-dependent oxidation of 4-(phosphooxy)-L-threonine (HTP) into 2-amino-3-oxo-4-(phosphooxy)butyric acid which spontaneously decarboxylates to form 3-amino-2-oxopropyl phosphate (AHAP). This Stenotrophomonas maltophilia (strain K279a) protein is 4-hydroxythreonine-4-phosphate dehydrogenase.